Here is a 3413-residue protein sequence, read N- to C-terminus: Protein pecanex (3413 aa).

The next 2 membrane-spanning stretches (helical) occupy residues V33–F53 and W57–A77. A glycan (N-linked (GlcNAc...) asparagine) is linked at N164. Residues G182–S195 show a composition bias toward low complexity. Disordered regions lie at residues G182–A213 and G235–L314. Polar residues predominate over residues V196 to A213. N208 carries an N-linked (GlcNAc...) asparagine glycan. Low complexity predominate over residues A302–N312. N317 carries an N-linked (GlcNAc...) asparagine glycan. Disordered regions lie at residues P327 to P363, L379 to H403, P540 to G609, and P625 to P651. A compositionally biased stretch (polar residues) spans L330 to S354. Residues R392 to K402 are compositionally biased toward basic and acidic residues. Positions G541 to A559 are enriched in gly residues. N-linked (GlcNAc...) asparagine glycans are attached at residues N569 and N581. The span at N569 to K582 shows a compositional bias: polar residues. Residues G599 to G609 show a composition bias toward gly residues. Positions P625–P634 are enriched in polar residues. Residue N685 is glycosylated (N-linked (GlcNAc...) asparagine). The segment covering E720 to D730 has biased composition (basic and acidic residues). Disordered regions lie at residues E720–V745, H816–P873, R886–Q921, and K1002–S1021. The segment covering H816–A826 has biased composition (basic residues). The segment covering S828–G846 has biased composition (low complexity). The segment covering N847–D856 has biased composition (acidic residues). The N-linked (GlcNAc...) asparagine glycan is linked to N857. The segment covering S1008 to S1021 has biased composition (low complexity). N1010, N1015, N1069, and N1199 each carry an N-linked (GlcNAc...) asparagine glycan. A run of 2 helical transmembrane segments spans residues M1315–L1335 and L1343–V1363. Residue N1375 is glycosylated (N-linked (GlcNAc...) asparagine). 4 helical membrane passes run K1376–L1396, V1423–S1443, L1474–P1494, and G1504–L1524. Residue N1572 is glycosylated (N-linked (GlcNAc...) asparagine). 3 disordered regions span residues Q1577–P1675, D1722–T1744, and A1760–P1813. 2 stretches are compositionally biased toward basic and acidic residues: residues R1587 to I1598 and T1607 to D1620. Over residues K1639–S1666 the composition is skewed to low complexity. Over residues S1725–L1738 the composition is skewed to polar residues. 5 consecutive repeat copies span residues G1776–T1777, G1778–T1779, G1780–T1781, G1782–T1783, and G1784–T1785. The segment at G1776–T1785 is 5 X 2 AA tandem repeats of G-T. 2 N-linked (GlcNAc...) asparagine glycosylation sites follow: N1791 and N1804. Over residues G1799–N1808 the composition is skewed to low complexity. Transmembrane regions (helical) follow at residues L1830–T1850, L1856–P1876, L1914–S1934, Q1940–L1960, and I1976–I1996. The interval S2344–T2463 is disordered. Over residues G2346 to A2370 the composition is skewed to low complexity. Residues N2380 and N2387 are each glycosylated (N-linked (GlcNAc...) asparagine). Low complexity predominate over residues S2389–R2411. The segment covering G2437 to D2447 has biased composition (gly residues). Residues Q2449–T2463 are compositionally biased toward polar residues. N-linked (GlcNAc...) asparagine glycosylation is found at N2458, N2619, and N2717. 2 disordered regions span residues L2908–S2997 and E3198–G3242. Basic and acidic residues predominate over residues R2940–A2956. N3246 carries N-linked (GlcNAc...) asparagine glycosylation. The segment at A3295 to V3413 is disordered. A compositionally biased stretch (acidic residues) spans E3310–E3323. Residues T3364–S3377 show a composition bias toward low complexity. Positions Q3380–E3406 are enriched in acidic residues.

The protein belongs to the pecanex family.

It is found in the membrane. In terms of biological role, involved in neurogenesis. The polypeptide is Protein pecanex (pcx) (Drosophila melanogaster (Fruit fly)).